The following is a 360-amino-acid chain: Probable L-asparaginase 3 (360 aa).

The N-terminal stretch at 1–16 (MWSSIISFLFFSVALC) is a signal peptide. Residues Asn27, Asn35, and Asn40 are each glycosylated (N-linked (GlcNAc...) asparagine). Positions 39 to 359 (PNVTIFAMGG…QNITDIFSLE (321 aa)) constitute an Asparaginase/glutaminase domain. Residue Thr49 is the O-isoaspartyl threonine intermediate of the active site. Asn82 carries an N-linked (GlcNAc...) asparagine glycan. A substrate-binding site is contributed by Ser96. Asn106 carries N-linked (GlcNAc...) asparagine glycosylation. A substrate-binding site is contributed by 129 to 130 (TD). 5 N-linked (GlcNAc...) asparagine glycosylation sites follow: Asn144, Asn179, Asn246, Asn302, and Asn351.

It belongs to the asparaginase 1 family.

It is found in the secreted. The protein resides in the cell wall. It carries out the reaction L-asparagine + H2O = L-aspartate + NH4(+). The sequence is that of Probable L-asparaginase 3 from Schizosaccharomyces pombe (strain 972 / ATCC 24843) (Fission yeast).